We begin with the raw amino-acid sequence, 207 residues long: High frequency lysogenization protein HflD homolog (207 aa).

This sequence belongs to the HflD family.

It is found in the cytoplasm. Its subcellular location is the cell inner membrane. The polypeptide is High frequency lysogenization protein HflD homolog (Tolumonas auensis (strain DSM 9187 / NBRC 110442 / TA 4)).